The sequence spans 125 residues: Large ribosomal subunit protein bL21 (125 aa).

The protein belongs to the bacterial ribosomal protein bL21 family. In terms of assembly, part of the 50S ribosomal subunit. Contacts protein L20.

This protein binds to 23S rRNA in the presence of protein L20. The chain is Large ribosomal subunit protein bL21 from Synechococcus sp. (strain CC9902).